Consider the following 260-residue polypeptide: Snake venom serine protease KN5 (260 aa).

An N-terminal signal peptide occupies residues 1 to 18 (MVLIRVLANLLILQLSYA). Positions 19–24 (QKSSEL) are excised as a propeptide. The region spanning 25–251 (VIGGDECNIN…HLDWIQSIIA (227 aa)) is the Peptidase S1 domain. 5 disulfides stabilise this stretch: Cys31–Cys165, Cys100–Cys258, Cys144–Cys212, Cys176–Cys191, and Cys202–Cys227. Catalysis depends on His67, which acts as the Charge relay system. Residue Asn105 is glycosylated (N-linked (GlcNAc...) asparagine). Asp112 serves as the catalytic Charge relay system. N-linked (GlcNAc...) asparagine glycosylation is found at Asn124 and Asn172. The active-site Charge relay system is Ser206. N-linked (GlcNAc...) asparagine glycans are attached at residues Asn213 and Asn255.

The protein belongs to the peptidase S1 family. Snake venom subfamily. As to quaternary structure, monomer. Expressed by the venom gland.

It localises to the secreted. Snake venom serine protease that may act in the hemostasis system of the prey. In Trimeresurus stejnegeri (Chinese green tree viper), this protein is Snake venom serine protease KN5.